Here is a 95-residue protein sequence, read N- to C-terminus: uncharacterized protein (95 aa).

The N-terminal stretch at 1–22 (MLPGFTMIITSLLLTFFREVEH) is a signal peptide. Residues 23–52 (LLPECLTITNTPQRTLVLIQRFTLLQKVMT) are Extracellular-facing. Residues 53 to 69 (IHLLLSIGTLGSLFTLH) traverse the membrane as a helical segment. At 70–95 (PQLLKTNLLQKLHKELNSNLDYLISC) the chain is on the cytoplasmic side.

It localises to the host membrane. This is an uncharacterized protein from Acidianus bottle-shaped virus (isolate Italy/Pozzuoli) (ABV).